A 212-amino-acid chain; its full sequence is Actin-depolymerizing factor 1, isoforms a/b (212 aa).

One can recognise an ADF-H domain in the interval 3-159; the sequence is SGVMVDPDVQ…SHKELLNNCP (157 aa).

Belongs to the actin-binding proteins ADF family. In terms of assembly, interacts with F-actin.

Its function is as follows. Depolymerizes growing actin filaments in muscle cells; required for the assembly of actin filaments into the functional contractile myofilament lattice of muscle. Competes with unc-87 for actin binding and inhibits the actin-bundling activity of unc-87. This is Actin-depolymerizing factor 1, isoforms a/b from Caenorhabditis elegans.